The following is a 97-amino-acid chain: Large ribosomal subunit protein eL21 (97 aa).

Polar residues predominate over residues 1–12; the sequence is MPSSNGPRQATR. The segment at 1–35 is disordered; sequence MPSSNGPRQATRNKLKNDARERGTSPPQRSIEEYD.

Belongs to the eukaryotic ribosomal protein eL21 family.

This Natronomonas pharaonis (strain ATCC 35678 / DSM 2160 / CIP 103997 / JCM 8858 / NBRC 14720 / NCIMB 2260 / Gabara) (Halobacterium pharaonis) protein is Large ribosomal subunit protein eL21.